The chain runs to 437 residues: Dolichyl-diphosphooligosaccharide--protein glycosyltransferase subunit wbp1 (437 aa).

A signal peptide spans 1 to 19; sequence MKSALCIALALTWSLLVQA. The Lumenal portion of the chain corresponds to 20–401; that stretch reads ARQTVLAVAD…FPRFLPHAYP (382 aa). 2 N-linked (GlcNAc...) asparagine glycosylation sites follow: N275 and N289. A helical membrane pass occupies residues 402–422; the sequence is YYASCFSVLGAFLLFCGIWLL. Residues 423-437 are Cytoplasmic-facing; sequence QKPAKPVVPSAKKQN.

This sequence belongs to the DDOST 48 kDa subunit family. As to quaternary structure, component of the oligosaccharyltransferase (OST) complex.

The protein localises to the endoplasmic reticulum. It localises to the membrane. Its pathway is protein modification; protein glycosylation. Subunit of the oligosaccharyl transferase (OST) complex that catalyzes the initial transfer of a defined glycan (Glc(3)Man(9)GlcNAc(2) in eukaryotes) from the lipid carrier dolichol-pyrophosphate to an asparagine residue within an Asn-X-Ser/Thr consensus motif in nascent polypeptide chains, the first step in protein N-glycosylation. N-glycosylation occurs cotranslationally and the complex associates with the Sec61 complex at the channel-forming translocon complex that mediates protein translocation across the endoplasmic reticulum (ER). All subunits are required for a maximal enzyme activity. The polypeptide is Dolichyl-diphosphooligosaccharide--protein glycosyltransferase subunit wbp1 (wbp1) (Schizosaccharomyces pombe (strain 972 / ATCC 24843) (Fission yeast)).